The sequence spans 475 residues: NADH-ubiquinone oxidoreductase chain 2 (475 aa).

13 helical membrane-spanning segments follow: residues 45–65 (LAVL…GIQY), 82–102 (APIV…LTTT), 112–132 (IALL…VNDL), 133–153 (IPLY…TGVY), 162–182 (AAIL…LSSA), 198–220 (TYYS…ALVF), 240–260 (LYIT…FIYL), 262–282 (IHLF…AVAA), 291–311 (IKSI…TAVL), 318–338 (YIYI…ILAI), 365–385 (LCIA…LPGF), 402–422 (LEAL…AYII), and 447–467 (FIIS…PTLL).

It belongs to the complex I subunit 2 family.

It localises to the mitochondrion inner membrane. The enzyme catalyses a ubiquinone + NADH + 5 H(+)(in) = a ubiquinol + NAD(+) + 4 H(+)(out). In terms of biological role, core subunit of the mitochondrial membrane respiratory chain NADH dehydrogenase (Complex I) that is believed to belong to the minimal assembly required for catalysis. Complex I functions in the transfer of electrons from NADH to the respiratory chain. The immediate electron acceptor for the enzyme is believed to be ubiquinone. This is NADH-ubiquinone oxidoreductase chain 2 (NAD2) from Candida albicans (strain SC5314 / ATCC MYA-2876) (Yeast).